A 240-amino-acid polypeptide reads, in one-letter code: Transcription factor bHLH47 (240 aa).

The segment covering 1 to 13 has biased composition (polar residues); that stretch reads MVSKTPSTSSDEA. Residues 1 to 26 are disordered; that stretch reads MVSKTPSTSSDEANATADERCRKGKV. Positions 27 to 77 constitute a bHLH domain; that stretch reads PKRINKAVRERLKREHLNELFIELADTLELNQQNSGKASILCEATRFLKDV. The stretch at 98–131 forms a coiled coil; the sequence is VTTEKNELKEETSVLETEISKLQNEIEARANQSK. A compositionally biased stretch (polar residues) spans 128–138; it reads NQSKPDLNTSP. The interval 128 to 153 is disordered; the sequence is NQSKPDLNTSPAPEYHHHHYQQQHPE.

Homodimer. Forms heterodimer with PYEL proteins bHLH115, bHLH104 and ILR3. In terms of tissue distribution, expressed constitutively in roots, leaves, stems, and flowers.

It localises to the nucleus. This Arabidopsis thaliana (Mouse-ear cress) protein is Transcription factor bHLH47 (BHLH47).